We begin with the raw amino-acid sequence, 479 residues long: Nuclear envelope integral membrane protein 2 (479 aa).

The signal sequence occupies residues 1–23; sequence MEKLAAFILVLTLLCAYWQSAEG. Asn-69 carries an N-linked (GlcNAc...) asparagine glycan. Helical transmembrane passes span 172-192, 203-223, 233-253, 276-296, and 301-321; these read LFFY…FLTL, LFLV…QRVL, HWME…AVCY, IVLL…VAVL, and ILPL…SFLA. The N-linked (GlcNAc...) asparagine glycan is linked to Asn-414. The interval 414–479 is disordered; that stretch reads NSSSSDTQSH…PLDPEDQDFF (66 aa). Residues 438-449 show a composition bias toward low complexity; that stretch reads NSPPVLNNLPSP. A compositionally biased stretch (pro residues) spans 450–470; that stretch reads TIYPPTICPYPPVTYTPQPEP.

This sequence belongs to the NEMP family.

Its subcellular location is the nucleus inner membrane. Its function is as follows. Contributes to nuclear envelope stiffness in germ cells. Involved in male and female fertility. The protein is Nuclear envelope integral membrane protein 2 of Danio rerio (Zebrafish).